A 288-amino-acid chain; its full sequence is Thymidylate synthase (288 aa).

Arg21 is a dUMP binding site. Asn51 serves as a coordination point for (6R)-5,10-methylene-5,6,7,8-tetrahydrofolate. 150–151 lines the dUMP pocket; sequence RR. Cys170 acts as the Nucleophile in catalysis. Residues 190-193, Asn201, and 231-233 contribute to the dUMP site; these read RSGD and HIY. Asp193 provides a ligand contact to (6R)-5,10-methylene-5,6,7,8-tetrahydrofolate. Residue Ala287 coordinates (6R)-5,10-methylene-5,6,7,8-tetrahydrofolate.

It belongs to the thymidylate synthase family. Bacterial-type ThyA subfamily. As to quaternary structure, homodimer.

It localises to the cytoplasm. It catalyses the reaction dUMP + (6R)-5,10-methylene-5,6,7,8-tetrahydrofolate = 7,8-dihydrofolate + dTMP. It functions in the pathway pyrimidine metabolism; dTTP biosynthesis. Its function is as follows. Catalyzes the reductive methylation of 2'-deoxyuridine-5'-monophosphate (dUMP) to 2'-deoxythymidine-5'-monophosphate (dTMP) while utilizing 5,10-methylenetetrahydrofolate (mTHF) as the methyl donor and reductant in the reaction, yielding dihydrofolate (DHF) as a by-product. This enzymatic reaction provides an intracellular de novo source of dTMP, an essential precursor for DNA biosynthesis. This is Thymidylate synthase from Phytoplasma mali (strain AT).